Consider the following 567-residue polypeptide: Ribulokinase (567 aa).

This sequence belongs to the ribulokinase family.

It catalyses the reaction D-ribulose + ATP = D-ribulose 5-phosphate + ADP + H(+). It carries out the reaction L-ribulose + ATP = L-ribulose 5-phosphate + ADP + H(+). It functions in the pathway carbohydrate degradation; L-arabinose degradation via L-ribulose; D-xylulose 5-phosphate from L-arabinose (bacterial route): step 2/3. The polypeptide is Ribulokinase (Vibrio parahaemolyticus serotype O3:K6 (strain RIMD 2210633)).